Reading from the N-terminus, the 439-residue chain is Type 3 secretion system ATPase (439 aa).

172-177 provides a ligand contact to ATP; the sequence is GGGKST.

Belongs to the ATPase alpha/beta chains family. T3SS ATPase subfamily. In terms of assembly, the core secretion machinery of the T3SS is composed of approximately 20 different proteins, including cytoplasmic components, a base, an export apparatus and a needle. This subunit is part of the cytosolic complex. Forms homohexamers.

Its subcellular location is the cytoplasm. The enzyme catalyses ATP + H2O + cellular proteinSide 1 = ADP + phosphate + cellular proteinSide 2.. Its function is as follows. ATPase component of the type III secretion system (T3SS), also called injectisome, which is used to inject bacterial effector proteins into eukaryotic host cells. Acts as a molecular motor to provide the energy that is required for the export of proteins. Required for type III secretion apparatus (T3SA) formation, proper protein secretion, host cell invasion and virulence. May play a critical role in T3SS substrate recognition, disassembly of the effector/chaperone complex and unfolding of the effector in an ATP-dependent manner prior to secretion. The protein is Type 3 secretion system ATPase of Yersinia pseudotuberculosis serotype I (strain IP32953).